We begin with the raw amino-acid sequence, 737 residues long: MAKQVFQTTFAGRELIVETGQVAKQANGSVVVRYGESTVLTAAVMSKKMATGDFFPLQVNYEEKMYAAGKFPGGFMKREGRPSTDATLTARLIDRPIRPMFAEGFRNEVQVINTVLSYDENASAPMAAMFGSSLALSISDIPFDGPIAGVQVGYVDGQIIINPSQEQAEQSLLELTVAGTKHAINMVESGAKELSEEIMLEALLKGHEAVKELIAFQEEIVAAVGKEKAEVELLHVDAELQAEIIAAYNSDLQKAVQVEEKLAREAATQVVKDQVTAVYEEKYADHEEFDRIMRDVAEILEQMEHAEVRRLITEDKVRPDGRKVDEIRPLDAVVDFLPRVHGSGLFTRGQTQALSVLTLAPMGETQIIDGLDPEYKKRFMHHYNFPQYSVGETGRYGAPGRREIGHGALGERALAQVLPSLEEFPYAIRLVAEVLESNGSSSQASICAGTLALMAGGVPIKAPVAGIAMGLISDGNNYTVLTDIQGLEDHFGDMDFKVAGTRDGITALQMDIKIQGITAEILTEALAQAKKARFEILDVIEATIPEVRPELAPTAPKIDTIKIDVDKIKIVIGKGGETIDKIIAETGVKIDIDEEGNVSIYSSDQDAINRAKEIIAGLVREAKVDEVYRAKVVRIEKFGAFVNLFDKTDALVHISEMAWTRTNRVEDLVEIGDEVDVKVIKIDEKGRIDASMKALLPRPPKPEHDEKGEKSERPHRPRHQKDYKPKKEFTETSKDSE.

Residues Asp-489 and Asp-495 each coordinate Mg(2+). One can recognise a KH domain in the interval 556–615 (PKIDTIKIDVDKIKIVIGKGGETIDKIIAETGVKIDIDEEGNVSIYSSDQDAINRAKEII). In terms of domain architecture, S1 motif spans 625–693 (DEVYRAKVVR…EKGRIDASMK (69 aa)). Positions 691-737 (SMKALLPRPPKPEHDEKGEKSERPHRPRHQKDYKPKKEFTETSKDSE) are disordered. The span at 700 to 737 (PKPEHDEKGEKSERPHRPRHQKDYKPKKEFTETSKDSE) shows a compositional bias: basic and acidic residues.

Belongs to the polyribonucleotide nucleotidyltransferase family. Mg(2+) serves as cofactor.

Its subcellular location is the cytoplasm. It carries out the reaction RNA(n+1) + phosphate = RNA(n) + a ribonucleoside 5'-diphosphate. Its function is as follows. Involved in mRNA degradation. Catalyzes the phosphorolysis of single-stranded polyribonucleotides processively in the 3'- to 5'-direction. In Streptococcus pneumoniae serotype 4 (strain ATCC BAA-334 / TIGR4), this protein is Polyribonucleotide nucleotidyltransferase.